We begin with the raw amino-acid sequence, 1531 residues long: Protein turtle (1531 aa).

At 1 to 858 the chain is on the extracellular side; that stretch reads MGVCADLGSH…PARVKHKAIT (858 aa). The interval 19 to 44 is disordered; sequence QHNTEKSKEQQQQSQPLEIPEQRASK. 5 consecutive Ig-like C2-type domains span residues 132–243, 253–340, 344–436, 440–529, and 536–624; these read PEDA…KNGT, PRFS…ARVI, GAVI…AYLS, PAKV…GVMD, and PAFT…MAVT. 5 cysteine pairs are disulfide-bonded: Cys150–Cys227, Cys275–Cys324, Cys366–Cys419, Cys462–Cys513, and Cys558–Cys611. Fibronectin type-III domains follow at residues 632–728 and 760–851; these read QPHA…TLED and PPRN…VPAR. Residues 859–879 form a helical membrane-spanning segment; that stretch reads AGVVGGILFFIVAIILSVCAV. Topologically, residues 880 to 1531 are cytoplasmic; it reads KICNKRKRRK…QAMQQMESVC (652 aa). Disordered stretches follow at residues 1248 to 1269 and 1318 to 1395; these read EETR…VPLQ and NLNL…SYPR. A compositionally biased stretch (low complexity) spans 1333–1349; it reads SPESRSSSSGFGSKNTS. The span at 1380 to 1389 shows a compositional bias: polar residues; sequence QQAQGQTPHG.

This sequence belongs to the immunoglobulin superfamily. Turtle family. Interacts with bdl. Exclusively expressed in the central nervous system.

Its subcellular location is the membrane. In terms of biological role, essential protein that plays a role in the establishment of coordinated motor control. In the developing eye, involved in axonal targeting of the R7 photoreceptor. This is Protein turtle (tutl) from Drosophila melanogaster (Fruit fly).